The following is an 890-amino-acid chain: Alanine--tRNA ligase (890 aa).

The Zn(2+) site is built by His573, His577, Cys676, and His680.

The protein belongs to the class-II aminoacyl-tRNA synthetase family. Zn(2+) is required as a cofactor.

It localises to the cytoplasm. It catalyses the reaction tRNA(Ala) + L-alanine + ATP = L-alanyl-tRNA(Ala) + AMP + diphosphate. In terms of biological role, catalyzes the attachment of alanine to tRNA(Ala) in a two-step reaction: alanine is first activated by ATP to form Ala-AMP and then transferred to the acceptor end of tRNA(Ala). Also edits incorrectly charged Ser-tRNA(Ala) and Gly-tRNA(Ala) via its editing domain. The polypeptide is Alanine--tRNA ligase (Corynebacterium efficiens (strain DSM 44549 / YS-314 / AJ 12310 / JCM 11189 / NBRC 100395)).